The chain runs to 156 residues: Small ribosomal subunit protein uS7cz/uS7cy (156 aa).

The protein belongs to the universal ribosomal protein uS7 family. In terms of assembly, part of the 30S ribosomal subunit.

It is found in the plastid. Its subcellular location is the chloroplast. Functionally, one of the primary rRNA binding proteins, it binds directly to 16S rRNA where it nucleates assembly of the head domain of the 30S subunit. The protein is Small ribosomal subunit protein uS7cz/uS7cy (rps7-A) of Saccharum hybrid (Sugarcane).